The following is a 297-amino-acid chain: UTP--glucose-1-phosphate uridylyltransferase (297 aa).

The protein belongs to the UDPGP type 2 family.

It carries out the reaction alpha-D-glucose 1-phosphate + UTP + H(+) = UDP-alpha-D-glucose + diphosphate. The protein operates within carbohydrate metabolism; nucleotide-sugar metabolism. It functions in the pathway bacterial outer membrane biogenesis; lipopolysaccharide biosynthesis. This Escherichia coli O157:H7 protein is UTP--glucose-1-phosphate uridylyltransferase (galF).